The primary structure comprises 201 residues: MTRTSPTLVLASTSRYRRELLARLRLPFEVLAPNVDETPLPGETRSATALRLSVLKAQAAAMTHRDALVIGSDQVLMLGTEQLGKPGDHERAFAQLKKMQGRAMVFHTALTLLNSRTGSVQTRDVPTVVHIRPLTDAQIEAYLKKEQPYDCAGSAKSEALGIALMERMESPDPTALIGLPLMALTEMLAQEGVDVLTWPAT.

Catalysis depends on Asp73, which acts as the Proton acceptor.

The protein belongs to the Maf family. YceF subfamily. The cofactor is a divalent metal cation.

The protein resides in the cytoplasm. It catalyses the reaction N(7)-methyl-GTP + H2O = N(7)-methyl-GMP + diphosphate + H(+). Its function is as follows. Nucleoside triphosphate pyrophosphatase that hydrolyzes 7-methyl-GTP (m(7)GTP). May have a dual role in cell division arrest and in preventing the incorporation of modified nucleotides into cellular nucleic acids. This Thiobacillus denitrificans (strain ATCC 25259 / T1) protein is 7-methyl-GTP pyrophosphatase.